Consider the following 196-residue polypeptide: Pyridoxal 5'-phosphate synthase subunit PdxT (196 aa).

47 to 49 (GES) contacts L-glutamine. The active-site Nucleophile is the C79. L-glutamine-binding positions include R106 and 134–135 (IR). Residues H170 and E172 each act as charge relay system in the active site.

It belongs to the glutaminase PdxT/SNO family. In the presence of PdxS, forms a dodecamer of heterodimers. Only shows activity in the heterodimer.

The enzyme catalyses aldehydo-D-ribose 5-phosphate + D-glyceraldehyde 3-phosphate + L-glutamine = pyridoxal 5'-phosphate + L-glutamate + phosphate + 3 H2O + H(+). It carries out the reaction L-glutamine + H2O = L-glutamate + NH4(+). It functions in the pathway cofactor biosynthesis; pyridoxal 5'-phosphate biosynthesis. Catalyzes the hydrolysis of glutamine to glutamate and ammonia as part of the biosynthesis of pyridoxal 5'-phosphate. The resulting ammonia molecule is channeled to the active site of PdxS. This chain is Pyridoxal 5'-phosphate synthase subunit PdxT, found in Bacillus cereus (strain B4264).